A 246-amino-acid polypeptide reads, in one-letter code: MRRIKLIVAYDGTHYAGYQVQPNGNTIQAEIESVLARMHRHPVKIIASGRTDARVHALGQVIHFDTTLEMPAERFVKALNAMLPDDILVKQAEEMDDTFHARYGAKRKEYRYHIRQTEDPFRRHYAATVTYKLSLEAMRQAMERLIGTHDFTSFSVTKAEVEDRVRTIYEAEVLEMGDEIIFRFVGSGFLYNQVRIMVGTVIEVGRGKYQPADITQMLEAKDRRVAGITAPPHGLYLWNVNYEKVD.

The active-site Nucleophile is the D52. Y110 is a substrate binding site.

The protein belongs to the tRNA pseudouridine synthase TruA family. In terms of assembly, homodimer.

The enzyme catalyses uridine(38/39/40) in tRNA = pseudouridine(38/39/40) in tRNA. In terms of biological role, formation of pseudouridine at positions 38, 39 and 40 in the anticodon stem and loop of transfer RNAs. This is tRNA pseudouridine synthase A from Exiguobacterium sp. (strain ATCC BAA-1283 / AT1b).